A 379-amino-acid chain; its full sequence is Cytochrome b (379 aa).

4 consecutive transmembrane segments (helical) span residues 33-53 (FGSL…FLAM), 77-98 (WLIR…YFHI), 113-133 (WNMG…GYVL), and 178-198 (FFAF…IHLL). Heme b is bound by residues His-83 and His-97. Positions 182 and 196 each coordinate heme b. His-201 lines the a ubiquinone pocket. Helical transmembrane passes span 226–246 (IKDI…VMFS), 288–308 (LGGV…PILH), 320–340 (LSQC…WIGG), and 347–367 (FITI…ILMP).

It belongs to the cytochrome b family. As to quaternary structure, the cytochrome bc1 complex contains 11 subunits: 3 respiratory subunits (MT-CYB, CYC1 and UQCRFS1), 2 core proteins (UQCRC1 and UQCRC2) and 6 low-molecular weight proteins (UQCRH/QCR6, UQCRB/QCR7, UQCRQ/QCR8, UQCR10/QCR9, UQCR11/QCR10 and a cleavage product of UQCRFS1). This cytochrome bc1 complex then forms a dimer. The cofactor is heme b.

It localises to the mitochondrion inner membrane. Its function is as follows. Component of the ubiquinol-cytochrome c reductase complex (complex III or cytochrome b-c1 complex) that is part of the mitochondrial respiratory chain. The b-c1 complex mediates electron transfer from ubiquinol to cytochrome c. Contributes to the generation of a proton gradient across the mitochondrial membrane that is then used for ATP synthesis. This chain is Cytochrome b (MT-CYB), found in Ctenomys leucodon (White-toothed tuco-tuco).